A 1196-amino-acid chain; its full sequence is Homeodomain-interacting protein kinase 2 (1196 aa).

Serine 16 carries the post-translational modification Phosphoserine. A Glycyl lysine isopeptide (Lys-Gly) (interchain with G-Cter in SUMO); alternate cross-link involves residue lysine 32. Lysine 32 is covalently cross-linked (Glycyl lysine isopeptide (Lys-Gly) (interchain with G-Cter in SUMO2); alternate). Residues 50 to 69 (VYSQSKNIPPSQPASTTVST) form a disordered region. Positions 97–230 (SASSTSVTGQ…TNEIVAIKIL (134 aa)) are transcriptional corepression. Serine 118 and serine 135 each carry phosphoserine. Threonine 141 carries the phosphothreonine modification. Positions 189-520 (HEVLCSMTNT…DADKRVTPIE (332 aa)) are interaction with DAXX. One can recognise a Protein kinase domain in the interval 199 to 527 (YEVLEFLGRG…PIETLNHPFV (329 aa)). ATP-binding positions include 205–213 (LGRGTFGQV) and lysine 228. Threonine 252 and threonine 273 each carry phosphothreonine. Aspartate 324 (proton acceptor) is an active-site residue. A Phosphotyrosine; by autocatalysis modification is found at tyrosine 361. Position 441 is a phosphoserine (serine 441). Threonine 482, threonine 517, and threonine 566 each carry phosphothreonine. The interaction with SKI and SMAD1 stretch occupies residues 539 to 844 (AHVKSCFQNM…KENTPPRCAM (306 aa)). The interval 600 to 800 (SATLSLANPE…MRQQPTSTTS (201 aa)) is interaction with DAZAP2. 2 positions are modified to phosphoserine: serine 634 and serine 668. At threonine 687 the chain carries Phosphothreonine. The segment at 752-897 (RNTHAHGSHY…ITISSDTDEE (146 aa)) is interaction with POU4F1. The tract at residues 774 to 876 (HVTLPAAQPL…TRERQRQTIV (103 aa)) is interaction with CTBP1. Positions 787-897 (VAHVMRQQPT…ITISSDTDEE (111 aa)) are interaction with HMGA1. Disordered regions lie at residues 792 to 847 (RQQP…MVHS) and 891 to 963 (SSDT…CTGN). Polar residues predominate over residues 793–829 (QQPTSTTSSRKSKQHQSSVRNVSTCEVTSSQAISSPQ). Residues 802 to 805 (RKSK) carry the Nuclear localization signal 1 (NLS1) motif. Serine 815 and serine 827 each carry phosphoserine. The Nuclear localization signal 2 (NLS2) motif lies at 832 to 835 (KRVK). Positions 839 to 934 (PPRCAMVHSS…PYSDSSSNTS (96 aa)) are interaction with TP53 and TP73. The interval 873 to 907 (QTIVIPDTPSPTVSVITISSDTDEEEEQKHAPTST) is interaction with UBE2I. A localization to nuclear speckles region spans residues 873–980 (QTIVIPDTPS…PLKTQASEVL (108 aa)). A required for localization to nuclear speckles region spans residues 873–980 (QTIVIPDTPS…PLKTQASEVL (108 aa)). The interval 884–908 (TVSVITISSDTDEEEEQKHAPTSTV) is SUMO interaction motifs (SIM); required for nuclear localization and kinase activity. The span at 923–937 (DSPYSDSSSNTSPYS) shows a compositional bias: low complexity. Phosphoserine is present on serine 934. The interval 935 to 1050 (PYSVQQRTGH…LSQAQQHMAA (116 aa)) is interaction with AXIN1. Positions 938–951 (VQQRTGHNGTNTLD) are enriched in polar residues. Glycyl lysine isopeptide (Lys-Gly) (interchain with G-Cter in SUMO2) cross-links involve residues lysine 953 and lysine 973. Residues 984 to 1196 (DSLGPAISAS…PAKVNQYPYI (213 aa)) are autoinhibitory domain (AID). A phosphoserine mark is found at serine 991, serine 993, serine 1042, serine 1153, and serine 1186. Residues 991 to 1046 (SASHHSSSFKSKSSSTVTSTSGHSSGSSSGAIAYRQQRPGPHFQQQQPLNLSQAQQ) show a composition bias toward low complexity. Positions 991–1058 (SASHHSSSFK…AADRTGSHRR (68 aa)) are disordered. A Glycyl lysine isopeptide (Lys-Gly) (interchain with G-Cter in SUMO) cross-link involves residue lysine 1189.

It belongs to the protein kinase superfamily. CMGC Ser/Thr protein kinase family. HIPK subfamily. Interacts with CREB1, SIAH1, WSB1, CBX4, TRADD, p53/TP53, TP73, TP63, CREBBP, DAXX, P53DINP1, SKI, SMAD1, SMAD2 and SMAD3, but not SMAD4. Interacts with SP100; positively regulates TP53-dependent transcription. Interacts with ATF1, PML, RUNX1, EP300, NKX1-2, NKX2-5, UBE2I, HMGA1, CTBP1, AXIN1, NLK, MYB, POU4F1, POU4F2, POU4F3, UBE2I, UBL1 and ZBTB4. Probably part of a complex consisting of p53/TP53, HIPK2 and AXIN1. Interacts with DAZAP2; the interaction results in phosphorylation of DAZAP2 which causes localization of DAZAP2 to the nucleus, reduces interaction of DAZAP2 with HIPK2 and prevents DAZAP2-dependent degradation of HIPK2. Interacts with SIAH1; the interaction is promoted by DAZAP2 and results in SIAH1-mediated ubiquitination and subsequent proteasomal degradation of HIPK2. In terms of assembly, interacts with SPN/CD43 cytoplasmic tail. In terms of processing, sumoylated. When conjugated it is directed to nuclear speckles. Desumoylated by SENP1. Sumoylation on Lys-32 is promoted by the E3 SUMO-protein ligase CBX4. Autophosphorylation at Tyr-361 in the activation loop activates the kinase and promotes nuclear localization. Post-translationally, ubiquitinated by FBXO3, WSB1 and SIAH1, leading to rapid proteasome-dependent degradation. The degradation mediated by FBXO3, but not ubiquitination, is prevented in the presence of PML. The degradation mediated by WSB1 and SIAH1 is reversibly reduced upon DNA damage. In terms of processing, cleaved at Asp-923 and Asp-984 by CASP6 in a p53/TP53-dependent manner. The cleaved form lacks the autoinhibitory C-terminal domain (AID), resulting in a hyperactive kinase, which potentiates p53/TP53 Ser-46 phosphorylation and subsequent activation of the cell death machinery. In terms of tissue distribution, ubiquitous. Abundant in muscle, heart, small intestine, stomach, kidney and brain; and low in testis, skin and lung.

Its subcellular location is the nucleus. The protein resides in the PML body. It is found in the cytoplasm. It carries out the reaction L-seryl-[protein] + ATP = O-phospho-L-seryl-[protein] + ADP + H(+). The enzyme catalyses L-threonyl-[protein] + ATP = O-phospho-L-threonyl-[protein] + ADP + H(+). Serine/threonine-protein kinase involved in transcription regulation, p53/TP53-mediated cellular apoptosis and regulation of the cell cycle. Acts as a corepressor of several transcription factors, including SMAD1 and POU4F1/Brn3a and probably NK homeodomain transcription factors. Phosphorylates PDX1, ATF1, PML, p53/TP53, CREB1, CTBP1, CBX4, RUNX1, EP300, CTNNB1, HMGA1, ZBTB4 and DAZAP2. Inhibits cell growth and promotes apoptosis through the activation of p53/TP53 both at the transcription level and at the protein level (by phosphorylation and indirect acetylation). The phosphorylation of p53/TP53 may be mediated by a p53/TP53-HIPK2-AXIN1 complex. Involved in the response to hypoxia by acting as a transcriptional co-suppressor of HIF1A. Mediates transcriptional activation of TP73. In response to TGFB, cooperates with DAXX to activate JNK. Negative regulator through phosphorylation and subsequent proteasomal degradation of CTNNB1 and the antiapoptotic factor CTBP1. In the Wnt/beta-catenin signaling pathway acts as an intermediate kinase between MAP3K7/TAK1 and NLK to promote the proteasomal degradation of MYB. Phosphorylates CBX4 upon DNA damage and promotes its E3 SUMO-protein ligase activity. Activates CREB1 and ATF1 transcription factors by phosphorylation in response to genotoxic stress. In response to DNA damage, stabilizes PML by phosphorylation. PML, HIPK2 and FBXO3 may act synergically to activate p53/TP53-dependent transactivation. Promotes angiogenesis, and is involved in erythroid differentiation, especially during fetal liver erythropoiesis. Phosphorylation of RUNX1 and EP300 stimulates EP300 transcription regulation activity. Triggers ZBTB4 protein degradation in response to DNA damage. In response to DNA damage, phosphorylates DAZAP2 which localizes DAZAP2 to the nucleus, reduces interaction of DAZAP2 with HIPK2 and prevents DAZAP2-dependent ubiquitination of HIPK2 by E3 ubiquitin-protein ligase SIAH1 and subsequent proteasomal degradation. Modulates HMGA1 DNA-binding affinity. In response to high glucose, triggers phosphorylation-mediated subnuclear localization shifting of PDX1. Involved in the regulation of eye size, lens formation and retinal lamination during late embryogenesis. The chain is Homeodomain-interacting protein kinase 2 (Hipk2) from Mus musculus (Mouse).